Reading from the N-terminus, the 386-residue chain is MLPLSIKDDEYKPPKFNLARKVSGWIRSIFSDSTSRNLFCFLCLNLSFAFVELFYGIWSNSLGLISDSFHMFFDCTALLAGLAASVISRWKTNEAFSYGYVRAEVLAGFVNGLFLIFTAFFIFSEGVERALDTPEVHHERLLPVSIMGLLVNIIGIFVFQHGGGHGHSHESGHGHSHSLFNGAVSHGHSHGGGHGHSHEGGHGHSHSQGGGHGHSHDHSPKHGYGSSCHDEPPEEHKGSSKQILEGVFLHIVADTLGSVGVIFSTILMQRYGLMIADPICSMLIALLIFVSVIPLLKQSIGILMQRTPPALDHVLPQCYQRVQQLQGVYHLQEPHFWTLCTDVYIGTLKLVIGPEADARWILSQTHNIFTQAGVRQLYVQIDFAAI.

At 1–37 (MLPLSIKDDEYKPPKFNLARKVSGWIRSIFSDSTSRN) the chain is on the cytoplasmic side. The helical transmembrane segment at 38–58 (LFCFLCLNLSFAFVELFYGIW) threads the bilayer. The Lumenal portion of the chain corresponds to 59–67 (SNSLGLISD). Residues 68-88 (SFHMFFDCTALLAGLAASVIS) traverse the membrane as a helical segment. The Cytoplasmic portion of the chain corresponds to 89–102 (RWKTNEAFSYGYVR). A helical membrane pass occupies residues 103–123 (AEVLAGFVNGLFLIFTAFFIF). The Lumenal segment spans residues 124-140 (SEGVERALDTPEVHHER). The helical transmembrane segment at 141-161 (LLPVSIMGLLVNIIGIFVFQH) threads the bilayer. Residues 161 to 222 (HGGGHGHSHE…GHSHDHSPKH (62 aa)) form a his-rich loop region. The Cytoplasmic portion of the chain corresponds to 162–246 (GGGHGHSHES…KGSSKQILEG (85 aa)). The disordered stretch occupies residues 167–239 (HSHESGHGHS…DEPPEEHKGS (73 aa)). A compositionally biased stretch (basic and acidic residues) spans 228 to 238 (CHDEPPEEHKG). Residues 247-267 (VFLHIVADTLGSVGVIFSTIL) traverse the membrane as a helical segment. Residues 268–272 (MQRYG) lie on the Lumenal side of the membrane. A helical transmembrane segment spans residues 273–293 (LMIADPICSMLIALLIFVSVI). The Cytoplasmic portion of the chain corresponds to 294–386 (PLLKQSIGIL…LYVQIDFAAI (93 aa)).

It belongs to the cation diffusion facilitator (CDF) transporter (TC 2.A.4) family. SLC30A subfamily. In terms of assembly, homooligomer.

Its subcellular location is the golgi apparatus membrane. It is found in the cytoplasmic vesicle. The protein resides in the golgi apparatus. It localises to the trans-Golgi network. The protein localises to the sarcoplasmic reticulum. Its subcellular location is the mitochondrion. The catalysed reaction is Zn(2+)(in) = Zn(2+)(out). Zinc ion transporter mediating zinc entry from the cytosol into the lumen of organelles along the secretory pathway. By contributing to zinc ion homeostasis within the early secretory pathway, regulates the activation and folding of enzymes like alkaline phosphatases. This chain is Zinc transporter 7-A (slc30a7-a), found in Xenopus laevis (African clawed frog).